We begin with the raw amino-acid sequence, 291 residues long: MATLDDLKKRIASVKSTQKITKAMKMVAAAKLRRAQENAEKGRPYSEKMNNIILNLSSGISDKENAPKLLSGTGEDKVHLCIVLTSDRGLCGGFNTNIIKKAKTYFQKISDEGKTLKIITVGSKGYDQLKRVYKDAIVERISFKDSKTINYLDAEKVGKMIIENFEKEEFDVCTIFYNKFKNVITQIPQEQQIIPLKTSEAEENSSEDNYEFEPDEDEILSNLLPKNISTQIFKAMLENSASEQGSRMSAMDNATRNAGEMVDKLTIEYNRSRQAAITKELIEIISGAESL.

It belongs to the ATPase gamma chain family. In terms of assembly, F-type ATPases have 2 components, CF(1) - the catalytic core - and CF(0) - the membrane proton channel. CF(1) has five subunits: alpha(3), beta(3), gamma(1), delta(1), epsilon(1). CF(0) has three main subunits: a, b and c.

It is found in the cell inner membrane. Functionally, produces ATP from ADP in the presence of a proton gradient across the membrane. The gamma chain is believed to be important in regulating ATPase activity and the flow of protons through the CF(0) complex. This Pelagibacter ubique (strain HTCC1062) protein is ATP synthase gamma chain.